The chain runs to 311 residues: Ribosomal RNA large subunit methyltransferase F (311 aa).

Belongs to the methyltransferase superfamily. METTL16/RlmF family.

It localises to the cytoplasm. It carries out the reaction adenosine(1618) in 23S rRNA + S-adenosyl-L-methionine = N(6)-methyladenosine(1618) in 23S rRNA + S-adenosyl-L-homocysteine + H(+). Functionally, specifically methylates the adenine in position 1618 of 23S rRNA. This is Ribosomal RNA large subunit methyltransferase F from Pectobacterium carotovorum subsp. carotovorum (strain PC1).